Consider the following 301-residue polypeptide: dTDP-4-dehydrorhamnose reductase (301 aa).

Residues 10–12 (GQV), Asp-30, 39–40 (DF), and 63–65 (AHT) each bind NADH. Residue 11–12 (QV) participates in NADPH binding. Residues 39-40 (DF), 63-65 (AHT), and Tyr-102 each bind NADPH. 104 to 105 (TD) is a binding site for dTDP-beta-L-rhamnose. 2 residues coordinate NADH: Tyr-129 and Lys-133. NADPH-binding residues include Tyr-129 and Lys-133. Tyr-129 serves as the catalytic Proton donor/acceptor. Trp-155 provides a ligand contact to dTDP-beta-L-rhamnose.

The protein belongs to the dTDP-4-dehydrorhamnose reductase family. As to quaternary structure, homodimer. Requires Mg(2+) as cofactor.

It carries out the reaction dTDP-beta-L-rhamnose + NADP(+) = dTDP-4-dehydro-beta-L-rhamnose + NADPH + H(+). Its pathway is carbohydrate biosynthesis; dTDP-L-rhamnose biosynthesis. It functions in the pathway bacterial outer membrane biogenesis; LPS O-antigen biosynthesis. In terms of biological role, involved in the biosynthesis of the dTDP-L-rhamnose which is an important component of lipopolysaccharide (LPS). Catalyzes the reduction of dTDP-6-deoxy-L-lyxo-4-hexulose to yield dTDP-L-rhamnose. RmlD uses NADH and NADPH nearly equally well. In Escherichia coli, this protein is dTDP-4-dehydrorhamnose reductase.